The primary structure comprises 291 residues: Transmembrane O-methyltransferase (291 aa).

The helical transmembrane segment at 31–51 (VGTMSPAIALAFLPLVVTLLV) threads the bilayer. S-adenosyl-L-methionine contacts are provided by residues Glu137, 139–140 (GT), Ser145, Glu163, and Ser193.

This sequence belongs to the class I-like SAM-binding methyltransferase superfamily. Cation-dependent O-methyltransferase family. Interacts with LHFPL5, PCDH15, TMC1, TMC2 and TMIE. Interacts directly with TMC1. The interaction of TOMT with TMC1 and TMC2 is required for the transportation of TMC1/2 into the stereocilia of hair cells.

The protein localises to the membrane. It is found in the cytoplasm. Its subcellular location is the endoplasmic reticulum. It carries out the reaction a catechol + S-adenosyl-L-methionine = a guaiacol + S-adenosyl-L-homocysteine + H(+). Functionally, catalyzes the O-methylation, and thereby the inactivation, of catecholamine neurotransmitters and catechol hormones. Required for auditory function. Component of the cochlear hair cell's mechanotransduction (MET) machinery. Involved in the assembly of the asymmetric tip-link MET complex. Required for transportation of TMC1 and TMC2 proteins into the mechanically sensitive stereocilia of the hair cells. The function in MET is independent of the enzymatic activity. This Homo sapiens (Human) protein is Transmembrane O-methyltransferase.